Consider the following 172-residue polypeptide: Small ribosomal subunit protein uS5 (172 aa).

An S5 DRBM domain is found at 17 to 80 (LREKMISVNR…EQARRNMFKV (64 aa)).

It belongs to the universal ribosomal protein uS5 family. In terms of assembly, part of the 30S ribosomal subunit. Contacts proteins S4 and S8.

Functionally, with S4 and S12 plays an important role in translational accuracy. In terms of biological role, located at the back of the 30S subunit body where it stabilizes the conformation of the head with respect to the body. This chain is Small ribosomal subunit protein uS5, found in Burkholderia pseudomallei (strain 1106a).